Consider the following 747-residue polypeptide: Elongation factor G, mitochondrial (747 aa).

The transit peptide at 1–32 (MTLITRVLNGNLPLRLSTLKAARQLQCGYSSH) directs the protein to the mitochondrion. The tr-type G domain maps to 42 to 319 (ERIRNIGISA…AVVDYLPNPG (278 aa)). Residues 51–58 (AHIDSGKT), 118–122 (DTPGH), and 172–175 (NKLD) each bind GTP.

It belongs to the TRAFAC class translation factor GTPase superfamily. Classic translation factor GTPase family. EF-G/EF-2 subfamily.

Its subcellular location is the mitochondrion. It functions in the pathway protein biosynthesis; polypeptide chain elongation. In terms of biological role, mitochondrial GTPase that catalyzes the GTP-dependent ribosomal translocation step during translation elongation. During this step, the ribosome changes from the pre-translocational (PRE) to the post-translocational (POST) state as the newly formed A-site-bound peptidyl-tRNA and P-site-bound deacylated tRNA move to the P and E sites, respectively. Catalyzes the coordinated movement of the two tRNA molecules, the mRNA and conformational changes in the ribosome. Essential during development as it acts as a retrograde signal from mitochondria to the nucleus to slow down cell proliferation if mitochondrial energy output is low. In Drosophila mojavensis (Fruit fly), this protein is Elongation factor G, mitochondrial.